Reading from the N-terminus, the 180-residue chain is Ribulose bisphosphate carboxylase small subunit, chloroplastic 4 (180 aa).

Residues 1-56 (MASSIVSSAAVATRGNGAQASMVAPFTGLKSTASFPVSRKQNLDITSIASNGGRVS) constitute a chloroplast transit peptide.

This sequence belongs to the RuBisCO small chain family. As to quaternary structure, heterohexadecamer of 8 large and 8 small subunits. In terms of assembly, (Microbial infection) Binds to tobamovirus movement protein; this interaction seems required for viral systemic movement.

Its subcellular location is the plastid. The protein resides in the chloroplast. The protein localises to the cell junction. It localises to the plasmodesma. Its function is as follows. RuBisCO catalyzes two reactions: the carboxylation of D-ribulose 1,5-bisphosphate, the primary event in carbon dioxide fixation, as well as the oxidative fragmentation of the pentose substrate. Both reactions occur simultaneously and in competition at the same active site. Although the small subunit is not catalytic it is essential for maximal activity. Involved in antiviral defenses. This chain is Ribulose bisphosphate carboxylase small subunit, chloroplastic 4, found in Solanum lycopersicum (Tomato).